A 91-amino-acid polypeptide reads, in one-letter code: Small ribosomal subunit protein uS19 (91 aa).

The protein belongs to the universal ribosomal protein uS19 family.

Its function is as follows. Protein S19 forms a complex with S13 that binds strongly to the 16S ribosomal RNA. The chain is Small ribosomal subunit protein uS19 from Ralstonia nicotianae (strain ATCC BAA-1114 / GMI1000) (Ralstonia solanacearum).